The primary structure comprises 134 residues: Tripartite terminase subunit 2 (134 aa).

It belongs to the herpesviridae TRM2 protein family. As to quaternary structure, associates with TRM1 and TRM3 to form the tripartite terminase complex.

The protein localises to the host nucleus. In terms of biological role, component of the molecular motor that translocates viral genomic DNA in empty capsid during DNA packaging. Forms a tripartite terminase complex together with TRM1 and TRM3 in the host cytoplasm. Once the complex reaches the host nucleus, it interacts with the capsid portal vertex. This portal forms a ring in which genomic DNA is translocated into the capsid. The protein is Tripartite terminase subunit 2 of Gallus gallus (Chicken).